Consider the following 563-residue polypeptide: Phosphomethylpyrimidine synthase (563 aa).

Substrate is bound by residues N180, M209, Y238, H274, S294–G296, D335–R338, and E374. H378 contacts Zn(2+). Y401 contributes to the substrate binding site. H442 contacts Zn(2+). Positions 522, 525, and 530 each coordinate [4Fe-4S] cluster.

This sequence belongs to the ThiC family. [4Fe-4S] cluster serves as cofactor.

It carries out the reaction 5-amino-1-(5-phospho-beta-D-ribosyl)imidazole + S-adenosyl-L-methionine = 4-amino-2-methyl-5-(phosphooxymethyl)pyrimidine + CO + 5'-deoxyadenosine + formate + L-methionine + 3 H(+). Its pathway is cofactor biosynthesis; thiamine diphosphate biosynthesis. Catalyzes the synthesis of the hydroxymethylpyrimidine phosphate (HMP-P) moiety of thiamine from aminoimidazole ribotide (AIR) in a radical S-adenosyl-L-methionine (SAM)-dependent reaction. The sequence is that of Phosphomethylpyrimidine synthase from Geobacillus thermodenitrificans (strain NG80-2).